The chain runs to 256 residues: Imidazole glycerol phosphate synthase subunit HisF (256 aa).

Active-site residues include aspartate 12 and aspartate 131.

The protein belongs to the HisA/HisF family. Heterodimer of HisH and HisF.

It localises to the cytoplasm. It carries out the reaction 5-[(5-phospho-1-deoxy-D-ribulos-1-ylimino)methylamino]-1-(5-phospho-beta-D-ribosyl)imidazole-4-carboxamide + L-glutamine = D-erythro-1-(imidazol-4-yl)glycerol 3-phosphate + 5-amino-1-(5-phospho-beta-D-ribosyl)imidazole-4-carboxamide + L-glutamate + H(+). It functions in the pathway amino-acid biosynthesis; L-histidine biosynthesis; L-histidine from 5-phospho-alpha-D-ribose 1-diphosphate: step 5/9. Functionally, IGPS catalyzes the conversion of PRFAR and glutamine to IGP, AICAR and glutamate. The HisF subunit catalyzes the cyclization activity that produces IGP and AICAR from PRFAR using the ammonia provided by the HisH subunit. The polypeptide is Imidazole glycerol phosphate synthase subunit HisF (Pseudomonas putida (strain GB-1)).